We begin with the raw amino-acid sequence, 85 residues long: Large ribosomal subunit protein bL27 (85 aa).

A disordered region spans residues 1 to 21; the sequence is MAHKKAGGSTRNGRDSRGKRL.

It belongs to the bacterial ribosomal protein bL27 family.

This Blochmanniella floridana protein is Large ribosomal subunit protein bL27.